The sequence spans 459 residues: Diaminopimelate decarboxylase (459 aa).

Lys-89 carries the post-translational modification N6-(pyridoxal phosphate)lysine. Pyridoxal 5'-phosphate contacts are provided by residues Gly-271 and 313–316; that span reads EPGR. Positions 316, 357, and 361 each coordinate substrate. Cys-388 acts as the Proton donor in catalysis. 2 residues coordinate substrate: Glu-389 and Tyr-418. Position 418 (Tyr-418) interacts with pyridoxal 5'-phosphate.

Belongs to the Orn/Lys/Arg decarboxylase class-II family. LysA subfamily. In terms of assembly, homodimer. Pyridoxal 5'-phosphate is required as a cofactor.

It catalyses the reaction meso-2,6-diaminopimelate + H(+) = L-lysine + CO2. It functions in the pathway amino-acid biosynthesis; L-lysine biosynthesis via DAP pathway; L-lysine from DL-2,6-diaminopimelate: step 1/1. Functionally, specifically catalyzes the decarboxylation of meso-diaminopimelate (meso-DAP) to L-lysine. This Corynebacterium efficiens (strain DSM 44549 / YS-314 / AJ 12310 / JCM 11189 / NBRC 100395) protein is Diaminopimelate decarboxylase.